The primary structure comprises 1235 residues: Insulin receptor substrate 1 (1235 aa).

Position 3 is a phosphoserine (Ser3). The mediates interaction with PHIP stretch occupies residues 3–133 (SPPDTDGFSD…AGGGCGGSCS (131 aa)). In terms of domain architecture, PH spans 12 to 115 (DVRKVGYLRK…WYQALLQLHN (104 aa)). Ser99 is modified (phosphoserine; by CK2). The region spanning 155-259 (FKEVWQVILK…EAMRAMSDEF (105 aa)) is the IRS-type PTB domain. The interval 258-425 (EFRPRTKSQS…SDGGFISSDE (168 aa)) is disordered. Residues Ser265 and Ser302 each carry the phosphoserine; by RPS6KB1 modification. Low complexity predominate over residues 265 to 276 (SQSSSSCSNPIS). The residue at position 307 (Ser307) is a Phosphoserine; by IKKB, MAPK8 and RPS6KB1. 4 positions are modified to phosphoserine: Ser318, Ser325, Ser340, and Ser343. A compositionally biased stretch (basic residues) spans 349–358 (THAHRHRGSS). 2 stretches are compositionally biased toward low complexity: residues 378-399 (SPSA…GSTS) and 407-419 (SSAS…SDGG). Residue Ser414 is modified to Phosphoserine. 2 positions are modified to phosphothreonine: Thr441 and Thr448. Tyr460 carries the post-translational modification Phosphotyrosine; by INSR. Residues 460–463 (YICM) carry the YXXM motif 1 motif. The residue at position 502 (Thr502) is a Phosphothreonine; by CK2. Residues 520–539 (THSAGTSPTISHQKTPSQSS) form a disordered region. At Ser522 the chain carries Phosphoserine; by RPS6KB1. The span at 522 to 539 (SAGTSPTISHQKTPSQSS) shows a compositional bias: polar residues. 2 consecutive short sequence motifs (YXXM motif) follow at residues 546-549 (YTEM) and 608-611 (YMPM). Tyr608 bears the Phosphotyrosine; by INSR mark. Residue Ser612 is modified to Phosphoserine. A Phosphotyrosine; by INSR modification is found at Tyr628. The short motif at 628 to 631 (YMPM) is the YXXM motif 4 element. Ser632 carries the phosphoserine; by RPS6KB1 and ROCK2 modification. Tyr658 bears the Phosphotyrosine mark. The YXXM motif 5 motif lies at 658–661 (YMMM). A compositionally biased stretch (low complexity) spans 669 to 689 (PDIGGGSCSSSSISAAPSGSS). The tract at residues 669–720 (PDIGGGSCSSSSISAAPSGSSYGKPWTNGVGGHHTHALPHAKPPVESGGGKL) is disordered. A YXXM motif 6 motif is present at residues 727–730 (YMNM). Positions 766–921 (FKHTQRPGEP…ATSRSSPSVR (156 aa)) are disordered. The span at 771-780 (RPGEPEEGAR) shows a compositional bias: basic and acidic residues. Low complexity-rich tracts occupy residues 785 to 794 (RLSSSSGRLR), 801 to 810 (DSSSSTSSDS), and 872 to 881 (QQQQQQQQQQ). Position 789 is a phosphoserine; by AMPK and SIK2 (Ser789). At Ser891 the chain carries Phosphoserine. Phosphotyrosine; by INSR is present on residues Tyr895, Tyr939, and Tyr987. The interval 895–897 (YVN) is GRB2-binding. Short sequence motifs (YXXM motif) lie at residues 939–942 (YMNM), 987–990 (YMTM), and 1010–1013 (YADM). Residues 1024–1165 (LPRTTGAAPP…SAPGCGAAGG (142 aa)) are disordered. Residues 1025–1046 (PRTTGAAPPPSSTASASASVTP) are compositionally biased toward low complexity. Over residues 1072–1084 (TRVNLSPNHNQSA) the composition is skewed to polar residues. Ser1099 carries the phosphoserine modification. At Ser1100 the chain carries Phosphoserine; by RPS6KB1. The span at 1101–1114 (ETFSAPTRAANTVS) shows a compositional bias: polar residues. Gly residues predominate over residues 1118 to 1128 (GAAGGGSGGGS). At Tyr1172 the chain carries Phosphotyrosine; by INSR. The interval 1177–1235 (LVKDVKQHPQDCPSQQQSLPPPPPHQPLGSNEGSSPRRSSEDLSTYASINFQKQPEDRQ) is disordered. Lys1179 is covalently cross-linked (Glycyl lysine isopeptide (Lys-Gly) (interchain with G-Cter in ubiquitin)). Residues 1204-1229 (LGSNEGSSPRRSSEDLSTYASINFQK) show a composition bias toward polar residues. The residue at position 1222 (Tyr1222) is a Phosphotyrosine; by INSR.

In terms of assembly, interacts with SOCS7. Interacts (via IRS-type PTB domain) with IGF1R and INSR (via the tyrosine-phosphorylated NPXY motif). Interacts with UBTF, FER and PIK3CA. Interacts (via phosphorylated YXXM motifs) with PIK3R1. Interacts with ROCK1. Interacts (via PH domain) with PHIP. Interacts with GRB2. Interacts with ALK. Interacts with EIF2AK2/PKR. Interacts with GKAP1. Interacts with DGKZ in the absence of insulin; insulin stimulation decreases this interaction. Found in a ternary complex with DGKZ and PIP5K1A in the absence of insulin stimulation. Interacts with SQSTM1; the interaction is disrupted by the presence of tensin TNS2. Interacts with NCK1 (via SH2 domain). Interacts with NCK2 (via SH3 domain). Interacts with SH2B1; this interaction enhances leptin-induced activation of the PI3-kinase pathway. Interacts with DVL2; this interaction promotes the Wnt/beta-catenin signaling pathway. Interacts with JAK1. Serine phosphorylation of IRS1 is a mechanism for insulin resistance. Ser-307 phosphorylation inhibits insulin action through disruption of IRS1 interaction with the insulin receptor, and Ser-789 phosphorylation is increased in the liver of insulin-resistant rats. Phosphorylation of Tyr-895 is required for GRB2-binding. Phosphorylated by ALK. Phosphorylated at Ser-265, Ser-302, Ser-632 and Ser-1100 by RPS6KB1; phosphorylation induces accelerated degradation of IRS1. Phosphorylated on tyrosine residues in response to insulin. In skeletal muscles, dephosphorylated on Tyr-608 by TNS2 under anabolic conditions; dephosphorylation results in the proteasomal degradation of IRS1. Post-translationally, ubiquitinated by the Cul7-RING(FBXW8) complex in a mTOR-dependent manner, leading to its degradation: the Cul7-RING(FBXW8) complex recognizes and binds IRS1 previously phosphorylated by S6 kinase (RPS6KB1 or RPS6KB2). Ubiquitinated by TRAF4 through 'Lys-29' linkage; this ubiquitination regulates the interaction of IRS1 with IGFR and IRS1 tyrosine phosphorylation upon IGF1 stimulation. In terms of processing, S-nitrosylation at by BLVRB inhibits its activity.

Its subcellular location is the cytoplasm. It is found in the nucleus. Signaling adapter protein that participates in the signal transduction from two prominent receptor tyrosine kinases, insulin receptor/INSR and insulin-like growth factor I receptor/IGF1R. Plays therefore an important role in development, growth, glucose homeostasis as well as lipid metabolism. Upon phosphorylation by the insulin receptor, functions as a signaling scaffold that propagates insulin action through binding to SH2 domain-containing proteins including the p85 regulatory subunit of PI3K, NCK1, NCK2, GRB2 or SHP2. Recruitment of GRB2 leads to the activation of the guanine nucleotide exchange factor SOS1 which in turn triggers the Ras/Raf/MEK/MAPK signaling cascade. Activation of the PI3K/AKT pathway is responsible for most of insulin metabolic effects in the cell, and the Ras/Raf/MEK/MAPK is involved in the regulation of gene expression and in cooperation with the PI3K pathway regulates cell growth and differentiation. Acts a positive regulator of the Wnt/beta-catenin signaling pathway through suppression of DVL2 autophagy-mediated degradation leading to cell proliferation. The sequence is that of Insulin receptor substrate 1 (Irs1) from Rattus norvegicus (Rat).